The chain runs to 492 residues: MNVSPQLLGYVVYTAIYNVYFHPLANFPGPKYLAASRIPLAFKRLTGEEVAMTYKLHIKYGPYVRVSPDELSTISTAATKDVYGHNTRAGGVPKDFKAYYMKNQRKDGTEGLLTAGDEEHYRQRKVFAPAFSDRAIREQEPLLKKYTDLLVAKSYEKCQTAGKVDMVMFFNFATFDFIADCVFGDSLHHLESMEYHPFLANITATVRFSAMRRVLRSFPILQAIFEAFMPKSMIKKRLEHVKFCDERVMNRLANDNPSHPDFWTLVEHAEAKGNGLTKGEMRQNGFLLLTAATETTSSLMSAITYLLCKNPEKMKKLQAEVRGAFKSTDEMNTITLPKLQYLQMAIEEGLRVYPPVPGGLPRRVVQPGTTLDGSASNMHIQSVVFYSQYASYHSPSHFARPHEFIPERWSQNPPAEFANDRLEAVQAFSAGPRDCIGKNLAYHEARMLLAKFVFTYDIELCKESSDWIKQKVYIVGAKSPLWVKLVKHERAD.

Residue Cys-435 coordinates heme.

Belongs to the cytochrome P450 family. Requires heme as cofactor.

It participates in secondary metabolite biosynthesis. In terms of biological role, cytochrome P450 monooxygenase; part of the gene cluster that mediates the biosynthesis of radicicol, a resorcylic acid lactone (RAL) that irreversibly inhibits the HSP90 molecular chaperone, an important target for cancer chemotherapy. The radicicol cluster encodes only two apparent post-PKS enzymes, a cytochrome P450 monooxygenase (rdc4) and a non-heme halogenase (rdc2) that could introduce the epoxide and the chlorine, respectively. If this cluster includes all the genes required for radicicol biosynthesis, the remaining structural features of radicicol are presumably generated by the PKSs rdc1 and rdc5. The C-2' ketone could arise if the R-PKS rdc5 and NR-PKS rdc1 each carry out four iterations, in contrast to the five iteration-three iteration split for the hypothemycin PKSs. The origin of the cis 5',6' double bond is not known. The radicicol R-PKS rdc5 ER domain may catalyze either double bond isomerization or reduction in the third iteration. The protein is Cytochrome P450 monooxygenase rdc4 of Metacordyceps chlamydosporia (Nematophagous fungus).